The chain runs to 250 residues: 2,3-bisphosphoglycerate-dependent phosphoglycerate mutase (250 aa).

Residues 12–19, 25–26, R64, 91–94, K102, 118–119, and 185–186 contribute to the substrate site; these read RHGQSAWN, TG, ERHY, RR, and GN. H13 (tele-phosphohistidine intermediate) is an active-site residue. The Proton donor/acceptor role is filled by E91.

This sequence belongs to the phosphoglycerate mutase family. BPG-dependent PGAM subfamily.

It carries out the reaction (2R)-2-phosphoglycerate = (2R)-3-phosphoglycerate. It functions in the pathway carbohydrate degradation; glycolysis; pyruvate from D-glyceraldehyde 3-phosphate: step 3/5. Its function is as follows. Catalyzes the interconversion of 2-phosphoglycerate and 3-phosphoglycerate. This Corynebacterium efficiens (strain DSM 44549 / YS-314 / AJ 12310 / JCM 11189 / NBRC 100395) protein is 2,3-bisphosphoglycerate-dependent phosphoglycerate mutase.